We begin with the raw amino-acid sequence, 259 residues long: 3-hydroxypropionyl-coenzyme A dehydratase (259 aa).

Glu113 functions as the Nucleophile in the catalytic mechanism. Glu133 (proton acceptor) is an active-site residue.

The protein belongs to the enoyl-CoA hydratase/isomerase family. Monomer.

It catalyses the reaction 3-hydroxypropanoyl-CoA = acryloyl-CoA + H2O. Functionally, plays a role in autotrophic carbon fixation via the 3-hydroxypropionate/4-hydroxybutyrate cycle. Catalyzes the reversible dehydration of 3-hydroxypropionyl-CoA to form acryloyl-CoA, and the reversible dehydration of (S)-3-hydroxybutyryl-CoA to form crotonyl-CoA. Inactive towards (R)-3-hydroxybutyryl-CoA. The protein is 3-hydroxypropionyl-coenzyme A dehydratase of Metallosphaera sedula (strain ATCC 51363 / DSM 5348 / JCM 9185 / NBRC 15509 / TH2).